Consider the following 191-residue polypeptide: Ferric nitrobindin-like protein (191 aa).

Positions 20–26 (GDWAGAG) match the GXWXGXG motif.

This sequence belongs to the nitrobindin family.

This is Ferric nitrobindin-like protein from Streptomyces coelicolor (strain ATCC BAA-471 / A3(2) / M145).